The chain runs to 358 residues: DNA replication and repair protein RecF (358 aa).

An ATP-binding site is contributed by 30 to 37; the sequence is GNNGSGKT.

Belongs to the RecF family.

The protein localises to the cytoplasm. Its function is as follows. The RecF protein is involved in DNA metabolism; it is required for DNA replication and normal SOS inducibility. RecF binds preferentially to single-stranded, linear DNA. It also seems to bind ATP. In Histophilus somni (strain 129Pt) (Haemophilus somnus), this protein is DNA replication and repair protein RecF.